Consider the following 97-residue polypeptide: Kunitz-type trypsin inhibitor 1 (97 aa).

This sequence belongs to the protease inhibitor I3 (leguminous Kunitz-type inhibitor) family.

Functionally, exhibits Kunitz trypsin protease inhibitor activity. The protein is Kunitz-type trypsin inhibitor 1 of Selenicereus costaricensis (Red-fleshed dragon fruit).